Reading from the N-terminus, the 77-residue chain is Large ribosomal subunit protein eL14 (77 aa).

Belongs to the eukaryotic ribosomal protein eL14 family.

This Methanococcus vannielii (strain ATCC 35089 / DSM 1224 / JCM 13029 / OCM 148 / SB) protein is Large ribosomal subunit protein eL14.